A 266-amino-acid polypeptide reads, in one-letter code: ATP synthase subunit a (266 aa).

The next 7 membrane-spanning stretches (helical) occupy residues Ile-28–Met-48, Leu-90–Phe-110, Val-125–Thr-145, His-158–Leu-178, Leu-187–Asn-207, Ala-216–Ile-236, and Leu-239–Leu-259.

The protein belongs to the ATPase A chain family. F-type ATPases have 2 components, CF(1) - the catalytic core - and CF(0) - the membrane proton channel. CF(1) has five subunits: alpha(3), beta(3), gamma(1), delta(1), epsilon(1). CF(0) has three main subunits: a(1), b(2) and c(9-12). The alpha and beta chains form an alternating ring which encloses part of the gamma chain. CF(1) is attached to CF(0) by a central stalk formed by the gamma and epsilon chains, while a peripheral stalk is formed by the delta and b chains.

It is found in the cell inner membrane. In terms of biological role, key component of the proton channel; it plays a direct role in the translocation of protons across the membrane. The chain is ATP synthase subunit a from Zymomonas mobilis subsp. mobilis (strain ATCC 31821 / ZM4 / CP4).